The chain runs to 139 residues: Large ribosomal subunit protein uL16 (139 aa).

The protein belongs to the universal ribosomal protein uL16 family. Part of the 50S ribosomal subunit.

In terms of biological role, binds 23S rRNA and is also seen to make contacts with the A and possibly P site tRNAs. The chain is Large ribosomal subunit protein uL16 from Mycoplasma pneumoniae (strain ATCC 29342 / M129 / Subtype 1) (Mycoplasmoides pneumoniae).